Reading from the N-terminus, the 94-residue chain is PTS system galactitol-specific EIIB component (94 aa).

Residues 1-94 (MKRKIIVACG…QNKILTILQG (94 aa)) enclose the PTS EIIB type-2 domain. Catalysis depends on Cys-9, which acts as the Phosphocysteine intermediate; for EIIB activity. The residue at position 9 (Cys-9) is a Phosphocysteine; by EIIA.

Forms a complex with one each of subunit of GatA, GatB and 2 subunits of GatC.

It is found in the cytoplasm. It carries out the reaction galactitol(out) + N(pros)-phospho-L-histidyl-[protein] = galactitol 1-phosphate(in) + L-histidyl-[protein]. The phosphoenolpyruvate-dependent sugar phosphotransferase system (PTS), a major carbohydrate active transport system, catalyzes the phosphorylation of incoming sugar substrates concomitant with their translocation across the cell membrane. The enzyme II complex composed of GatA, GatB and GatC is involved in galactitol transport. The sequence is that of PTS system galactitol-specific EIIB component (gatB) from Escherichia coli O157:H7.